Consider the following 37-residue polypeptide: Photosystem I reaction center subunit VIII (37 aa).

A helical membrane pass occupies residues 10–30 (IFVPLVGLVFPAIAMASLSLY).

It belongs to the PsaI family.

The protein localises to the plastid. The protein resides in the chloroplast thylakoid membrane. In terms of biological role, may help in the organization of the PsaL subunit. This is Photosystem I reaction center subunit VIII from Gossypium barbadense (Sea Island cotton).